The chain runs to 196 residues: Potassium-transporting ATPase KdpC subunit (196 aa).

A helical membrane pass occupies residues 17–37 (LLLLVATAGLGLVYPLAVFAV). Residues 73 to 93 (QPRPSAAGDGYDPTASGASNL) form a disordered region.

This sequence belongs to the KdpC family. The system is composed of three essential subunits: KdpA, KdpB and KdpC.

It is found in the cell membrane. In terms of biological role, part of the high-affinity ATP-driven potassium transport (or Kdp) system, which catalyzes the hydrolysis of ATP coupled with the electrogenic transport of potassium into the cytoplasm. This subunit acts as a catalytic chaperone that increases the ATP-binding affinity of the ATP-hydrolyzing subunit KdpB by the formation of a transient KdpB/KdpC/ATP ternary complex. This chain is Potassium-transporting ATPase KdpC subunit, found in Kineococcus radiotolerans (strain ATCC BAA-149 / DSM 14245 / SRS30216).